Reading from the N-terminus, the 413-residue chain is Aspartate aminotransferase, cytoplasmic (413 aa).

Positions 39 and 141 each coordinate L-aspartate. Ser-149 bears the Phosphoserine mark. L-aspartate is bound at residue Asn-195. N6-(pyridoxal phosphate)lysine is present on Lys-259. L-aspartate is bound at residue Arg-387.

The protein belongs to the class-I pyridoxal-phosphate-dependent aminotransferase family. As to quaternary structure, homodimer. Requires pyridoxal 5'-phosphate as cofactor.

Its subcellular location is the cytoplasm. It catalyses the reaction L-aspartate + 2-oxoglutarate = oxaloacetate + L-glutamate. It carries out the reaction L-cysteine + 2-oxoglutarate = 2-oxo-3-sulfanylpropanoate + L-glutamate. The enzyme catalyses (2S)-2-aminobutanoate + 2-oxoglutarate = 2-oxobutanoate + L-glutamate. The catalysed reaction is 3-sulfino-L-alanine + 2-oxoglutarate = 3-sulfinopyruvate + L-glutamate. Functionally, biosynthesis of L-glutamate from L-aspartate or L-cysteine. Important regulator of levels of glutamate, the major excitatory neurotransmitter of the vertebrate central nervous system. Acts as a scavenger of glutamate in brain neuroprotection. The aspartate aminotransferase activity is involved in hepatic glucose synthesis during development and in adipocyte glyceroneogenesis. Using L-cysteine as substrate, regulates levels of mercaptopyruvate, an important source of hydrogen sulfide. Mercaptopyruvate is converted into H(2)S via the action of 3-mercaptopyruvate sulfurtransferase (3MST). Hydrogen sulfide is an important synaptic modulator and neuroprotectant in the brain. In addition, catalyzes (2S)-2-aminobutanoate, a by-product in the cysteine biosynthesis pathway. The sequence is that of Aspartate aminotransferase, cytoplasmic from Homo sapiens (Human).